Consider the following 249-residue polypeptide: Tumor necrosis factor ligand superfamily member 12 (249 aa).

Over 1-21 (MAARRSQRRRGRRGEPGTALL) the chain is Cytoplasmic. Residues 22–42 (VPLALGLGLALACLGLLLAVV) form a helical; Signal-anchor for type II membrane protein membrane-spanning segment. Over 43–249 (SLGSRASLSA…LTYFGLFQVH (207 aa)) the chain is Extracellular. The interval 55–85 (PAQEELVAEEDQDPSELNPQTEESQDPAPFL) is disordered. Acidic residues predominate over residues 56-68 (AQEELVAEEDQDP). The region spanning 107 to 248 (IAAHYEVHPR…FLTYFGLFQV (142 aa)) is the THD domain. The N-linked (GlcNAc...) asparagine glycan is linked to Asn-139. A disulfide bridge links Cys-191 with Cys-210.

This sequence belongs to the tumor necrosis factor family. Homotrimer. Interacts with the angiogenic factor AGGF1/VG5Q. In terms of processing, the soluble form derives from the membrane form by proteolytic processing. In terms of tissue distribution, highly expressed in adult heart, pancreas, skeletal muscle, brain, colon, small intestine, lung, ovary, prostate, spleen, lymph node, appendix and peripheral blood lymphocytes. Low expression in kidney, testis, liver, placenta, thymus and bone marrow. Also detected in fetal kidney, liver, lung and brain.

The protein localises to the cell membrane. Its subcellular location is the secreted. Binds to FN14 and possibly also to TNRFSF12/APO3. Weak inducer of apoptosis in some cell types. Mediates NF-kappa-B activation. Promotes angiogenesis and the proliferation of endothelial cells. Also involved in induction of inflammatory cytokines. Promotes IL8 secretion. The polypeptide is Tumor necrosis factor ligand superfamily member 12 (TNFSF12) (Homo sapiens (Human)).